Here is a 37-residue protein sequence, read N- to C-terminus: DHGESFQMLESGRQMGMNVISAKYNLVTSQTRDSSYK.

The protein is Unknown protein 25 of Pseudotsuga menziesii (Douglas-fir).